The following is a 190-amino-acid chain: Adenylate kinase (190 aa).

12–17 (GSGKTT) lines the ATP pocket. Residues 34–63 (STGELLRAEVASGSERGKIIEGFTSKGNLV) form an NMP region. AMP-binding positions include Thr35, Arg40, 61 to 63 (NLV), 88 to 91 (GYPR), and Gln95. Positions 130–136 (GRARGAD) are LID. Arg131 contributes to the ATP binding site. Residues Arg133 and Arg145 each coordinate AMP. Arg173 lines the ATP pocket.

Belongs to the adenylate kinase family. Monomer.

It is found in the cytoplasm. It catalyses the reaction AMP + ATP = 2 ADP. It participates in purine metabolism; AMP biosynthesis via salvage pathway; AMP from ADP: step 1/1. Its function is as follows. Catalyzes the reversible transfer of the terminal phosphate group between ATP and AMP. Plays an important role in cellular energy homeostasis and in adenine nucleotide metabolism. The sequence is that of Adenylate kinase from Wolinella succinogenes (strain ATCC 29543 / DSM 1740 / CCUG 13145 / JCM 31913 / LMG 7466 / NCTC 11488 / FDC 602W) (Vibrio succinogenes).